The following is a 254-amino-acid chain: Enolase-phosphatase E1 (254 aa).

Mg(2+)-binding residues include Asp-13 and Glu-15. Substrate-binding positions include 127–128 (SS) and Lys-173. Asp-200 provides a ligand contact to Mg(2+).

The protein belongs to the HAD-like hydrolase superfamily. MasA/MtnC family. In terms of assembly, monomer. The cofactor is Mg(2+).

It is found in the cytoplasm. It localises to the nucleus. The enzyme catalyses 5-methylsulfanyl-2,3-dioxopentyl phosphate + H2O = 1,2-dihydroxy-5-(methylsulfanyl)pent-1-en-3-one + phosphate. The protein operates within amino-acid biosynthesis; L-methionine biosynthesis via salvage pathway; L-methionine from S-methyl-5-thio-alpha-D-ribose 1-phosphate: step 3/6. It functions in the pathway amino-acid biosynthesis; L-methionine biosynthesis via salvage pathway; L-methionine from S-methyl-5-thio-alpha-D-ribose 1-phosphate: step 4/6. Bifunctional enzyme that catalyzes the enolization of 2,3-diketo-5-methylthiopentyl-1-phosphate (DK-MTP-1-P) into the intermediate 2-hydroxy-3-keto-5-methylthiopentenyl-1-phosphate (HK-MTPenyl-1-P), which is then dephosphorylated to form the acireductone 1,2-dihydroxy-3-keto-5-methylthiopentene (DHK-MTPene). This Sclerotinia sclerotiorum (strain ATCC 18683 / 1980 / Ss-1) (White mold) protein is Enolase-phosphatase E1 (utr4).